A 395-amino-acid chain; its full sequence is Cation channel sperm-associated protein 3 (395 aa).

Residues 1–48 (MSQHFHHNPVRVKSGSLFATASEALQARLSKIKRKDKECQAYFRKVIK) lie on the Cytoplasmic side of the membrane. Residues 49–71 (STFFQIVMITTVTTNSFLLVLGT) form a helical membrane-spanning segment. Residues 72–80 (NYDIQFEFF) are Extracellular-facing. Residues 81–107 (RTFEVSELFFVSVYVCEFLMKVYVDPI) traverse the membrane as a helical segment. Position 108 (threonine 108) is a topological domain, cytoplasmic. A helical transmembrane segment spans residues 109 to 131 (YWKDGYNILDVIILIILTIPYLL). The Extracellular segment spans residues 132–143 (RKIKGNHSAYLH). Residues 144-160 (FADGIQSLRILKLISYS) form a helical membrane-spanning segment. Topologically, residues 161-168 (RGIRTLII) are cytoplasmic. A helical membrane pass occupies residues 169-195 (AVGETVYTVASVLTLLFLLMFVFAILG). Over 196–216 (FCLFGVTDRGDLENWGNLASA) the chain is Extracellular. Residues 217 to 236 (FFTLFSLATVDGWTDLQEEL) constitute an intramembrane region (helical; Pore-forming). Residues 237 to 242 (DKRKFT) lie on the Extracellular side of the membrane. A helical transmembrane segment spans residues 243-268 (VSRAFTILFILLASFIFLNMFVGVMI). Topologically, residues 269 to 395 (MHTEDSMKKF…ESSSSLSGLS (127 aa)) are cytoplasmic.

It belongs to the cation channel sperm-associated (TC 1.A.1.19) family. As to quaternary structure, component of the CatSper complex or CatSpermasome composed of the core pore-forming members CATSPER1, CATSPER2, CATSPER3 and CATSPER4 as well as auxiliary members CATSPERB, CATSPERG2, CATSPERD, CATSPERE, CATSPERZ, C2CD6/CATSPERT, SLCO6C1, TMEM249, TMEM262 and EFCAB9. HSPA1 may be an additional auxiliary complex member. The core complex members CATSPER1, CATSPER2, CATSPER3 and CATSPER4 form a heterotetrameric channel. The auxiliary CATSPERB, CATSPERG2, CATSPERD and CATSPERE subunits form a pavilion-like structure over the pore which stabilizes the complex through interactions with CATSPER4, CATSPER3, CATSPER1 and CATSPER2 respectively. SLCO6C1 interacts with CATSPERE and TMEM262/CATSPERH interacts with CATSPERB, further stabilizing the complex. C2CD6/CATSPERT interacts at least with CATSPERD and is required for targeting the CatSper complex in the flagellar membrane. As to expression, testis-specific.

It localises to the cell projection. It is found in the cilium. The protein localises to the flagellum membrane. The catalysed reaction is Ca(2+)(in) = Ca(2+)(out). In contrast to the human ortholog, not activated by progesterone. Activated by intracellular alkalinization. Its function is as follows. Pore-forming subunit of the CatSper complex, a sperm-specific voltage-gated calcium channel that plays a central role in sperm cell hyperactivation. Controls calcium entry to mediate the hyperactivated motility, a step needed for sperm motility which is essential late in the preparation of sperm for fertilization. The sequence is that of Cation channel sperm-associated protein 3 (Catsper3) from Mus musculus (Mouse).